The sequence spans 531 residues: Peptide chain release factor 3 (531 aa).

The 270-residue stretch at 13-282 (AKRRTFAIIS…TLIKYSPPPK (270 aa)) folds into the tr-type G domain. GTP contacts are provided by residues 22 to 29 (SHPDAGKT), 90 to 94 (DTPGH), and 144 to 147 (NKLD).

The protein belongs to the TRAFAC class translation factor GTPase superfamily. Classic translation factor GTPase family. PrfC subfamily.

It is found in the cytoplasm. Increases the formation of ribosomal termination complexes and stimulates activities of RF-1 and RF-2. It binds guanine nucleotides and has strong preference for UGA stop codons. It may interact directly with the ribosome. The stimulation of RF-1 and RF-2 is significantly reduced by GTP and GDP, but not by GMP. The sequence is that of Peptide chain release factor 3 from Psychrobacter arcticus (strain DSM 17307 / VKM B-2377 / 273-4).